We begin with the raw amino-acid sequence, 138 residues long: Acidic phospholipase A2 Cvv-E6b (138 aa).

An N-terminal signal peptide occupies residues 1-16 (MRTLWILAVLLLGVEG). 7 cysteine pairs are disulfide-bonded: Cys-42–Cys-131, Cys-44–Cys-60, Cys-59–Cys-111, Cys-65–Cys-138, Cys-66–Cys-104, Cys-73–Cys-97, and Cys-91–Cys-102. Positions 43, 45, and 47 each coordinate Ca(2+). Residue His-63 is part of the active site. A Ca(2+)-binding site is contributed by Asp-64. Asp-105 is a catalytic residue.

It depends on Ca(2+) as a cofactor. As to expression, expressed by the venom gland.

The protein resides in the secreted. It carries out the reaction a 1,2-diacyl-sn-glycero-3-phosphocholine + H2O = a 1-acyl-sn-glycero-3-phosphocholine + a fatty acid + H(+). Snake venom phospholipase A2 (PLA2) that shows very low inhibition of ADP-induced platelet aggregation in platelet-rich plasma of human, rabbit and guinea pig. PLA2 catalyzes the calcium-dependent hydrolysis of the 2-acyl groups in 3-sn-phosphoglycerides. The chain is Acidic phospholipase A2 Cvv-E6b from Crotalus viridis viridis (Prairie rattlesnake).